Reading from the N-terminus, the 425-residue chain is Serine--tRNA ligase (425 aa).

Disordered regions lie at residues 43 to 69 and 108 to 134; these read QRSS…SDPK and LPNL…WGKP. The span at 117-134 shows a compositional bias: basic and acidic residues; sequence PEGRDENDNQERHRWGKP. L-serine is bound at residue 233–235; it reads TAE. ATP is bound at residue 264–266; that stretch reads RRE. Glu-287 provides a ligand contact to L-serine. Position 351 to 354 (351 to 354) interacts with ATP; sequence EISS. Position 385 (Ser-385) interacts with L-serine.

Belongs to the class-II aminoacyl-tRNA synthetase family. Type-1 seryl-tRNA synthetase subfamily. As to quaternary structure, homodimer. The tRNA molecule binds across the dimer.

It localises to the cytoplasm. It carries out the reaction tRNA(Ser) + L-serine + ATP = L-seryl-tRNA(Ser) + AMP + diphosphate + H(+). The catalysed reaction is tRNA(Sec) + L-serine + ATP = L-seryl-tRNA(Sec) + AMP + diphosphate + H(+). Its pathway is aminoacyl-tRNA biosynthesis; selenocysteinyl-tRNA(Sec) biosynthesis; L-seryl-tRNA(Sec) from L-serine and tRNA(Sec): step 1/1. In terms of biological role, catalyzes the attachment of serine to tRNA(Ser). Is also able to aminoacylate tRNA(Sec) with serine, to form the misacylated tRNA L-seryl-tRNA(Sec), which will be further converted into selenocysteinyl-tRNA(Sec). The chain is Serine--tRNA ligase from Prochlorococcus marinus (strain MIT 9313).